A 159-amino-acid polypeptide reads, in one-letter code: NAD(P)H-quinone oxidoreductase subunit J, chloroplastic (159 aa).

The protein belongs to the complex I 30 kDa subunit family. In terms of assembly, NDH is composed of at least 16 different subunits, 5 of which are encoded in the nucleus. As to expression, leaves.

The protein resides in the plastid. It localises to the chloroplast thylakoid membrane. It catalyses the reaction a plastoquinone + NADH + (n+1) H(+)(in) = a plastoquinol + NAD(+) + n H(+)(out). The catalysed reaction is a plastoquinone + NADPH + (n+1) H(+)(in) = a plastoquinol + NADP(+) + n H(+)(out). In terms of biological role, NDH shuttles electrons from NAD(P)H:plastoquinone, via FMN and iron-sulfur (Fe-S) centers, to quinones in the photosynthetic chain and possibly in a chloroplast respiratory chain. The immediate electron acceptor for the enzyme in this species is believed to be plastoquinone. Couples the redox reaction to proton translocation, and thus conserves the redox energy in a proton gradient. This is NAD(P)H-quinone oxidoreductase subunit J, chloroplastic from Zea mays (Maize).